The following is a 498-amino-acid chain: NADPH:adrenodoxin oxidoreductase, mitochondrial (498 aa).

Residues 1 to 37 (MSTHKAALCKVQILKLFLISARCVRITRFYGVCGLST) constitute a mitochondrion transit peptide. FAD is bound by residues Ala-54, Glu-75, Leu-83, and Val-119. Residues 190–193 (QGNV), 234–235 (RR), and Glu-246 each bind NADP(+). Residues Trp-404 and 411 to 413 (GVI) each bind FAD. Gly-411 serves as a coordination point for NADP(+). Positions 469 to 488 (DSEETRRGETRGKPREKMLD) are enriched in basic and acidic residues. Residues 469 to 489 (DSEETRRGETRGKPREKMLDV) are disordered.

It belongs to the ferredoxin--NADP reductase type 1 family. It depends on FAD as a cofactor.

Its subcellular location is the mitochondrion inner membrane. It catalyses the reaction 2 reduced [adrenodoxin] + NADP(+) + H(+) = 2 oxidized [adrenodoxin] + NADPH. The protein operates within steroid metabolism; cholesterol metabolism. Functionally, serves as the first electron transfer protein in all the mitochondrial P450 systems including cholesterol side chain cleavage in all steroidogenic tissues, steroid 11-beta hydroxylation in the adrenal cortex, 25-OH-vitamin D3-24 hydroxylation in the kidney, and sterol C-27 hydroxylation in the liver. The chain is NADPH:adrenodoxin oxidoreductase, mitochondrial (fdxr) from Salvelinus fontinalis (Brook trout).